The sequence spans 253 residues: Patatin-like phospholipase domain-containing protein 4 (253 aa).

The 171-residue stretch at 6 to 176 folds into the PNPLA domain; sequence LSFAACGFLG…TNALPILPVG (171 aa). The GXSXG motif lies at 41–45; the sequence is GASAG. Catalysis depends on S43, which acts as the Nucleophile. The active-site Proton acceptor is D163. Positions 163–165 match the DGA/G motif; the sequence is DGG.

As to expression, expressed in all tissues examined, including heart, brain, placenta, lung, liver, muscle, kidney, pancreas and spleen.

Its subcellular location is the mitochondrion. It carries out the reaction a triacylglycerol + H2O = a diacylglycerol + a fatty acid + H(+). The enzyme catalyses a 1,2-diacyl-sn-glycero-3-phosphocholine + H2O = a 1-acyl-sn-glycero-3-phosphocholine + a fatty acid + H(+). It catalyses the reaction an all-trans-retinyl ester + H2O = all-trans-retinol + a fatty acid + H(+). The catalysed reaction is 2 a 1-acylglycerol = a 1,2-diacylglycerol + glycerol. It carries out the reaction a 1-acylglycerol + a 1,2-diacylglycerol = a triacylglycerol + glycerol. The enzyme catalyses a 1-acylglycerol + a 1,3-diacylglycerol = a triacylglycerol + glycerol. It catalyses the reaction a triacylglycerol + H2O = a 1,2-diacylglycerol + a fatty acid + H(+). The catalysed reaction is a triacylglycerol + H2O = a 1,3-diacylglycerol + a fatty acid + H(+). It carries out the reaction a triacylglycerol + all-trans-retinol = an all-trans-retinyl ester + a diacylglycerol. The enzyme catalyses 2 1-(9Z-octadecenoyl)-glycerol = 1,2-di-(9Z-octadecenoyl)-glycerol + glycerol. It catalyses the reaction 1-(9Z-octadecenoyl)-glycerol + 1,2-di-(9Z-octadecenoyl)-glycerol = 1,2,3-tri-(9Z-octadecenoyl)-glycerol + glycerol. The catalysed reaction is 1-(9Z-octadecenoyl)-glycerol + 1,3-di-(9Z-octadecenoyl)-glycerol = 1,2,3-tri-(9Z-octadecenoyl)-glycerol + glycerol. It carries out the reaction 1,2-di-(9Z-octadecenoyl)-glycerol + (9Z)-octadecenoate + H(+) = 1,2,3-tri-(9Z-octadecenoyl)-glycerol + H2O. The enzyme catalyses 1,2,3-tri-(9Z-octadecenoyl)-glycerol + H2O = 1,3-di-(9Z-octadecenoyl)-glycerol + (9Z)-octadecenoate + H(+). It catalyses the reaction all-trans-retinyl hexadecanoate + H2O = all-trans-retinol + hexadecanoate + H(+). The catalysed reaction is 1,2,3-tri-(9Z-octadecenoyl)-glycerol + all-trans-retinol = all-trans-retinyl 9Z-octadecenoate + di-(9Z)-octadecenoylglycerol. With respect to regulation, the triglyceride lipase activity is inhibited by BEL ((E)-6-(bromomethylene)-3-(1-naphthalenyl)-2H-tetrahydropyran-2-one), a suicide substrate inhibitor. Its function is as follows. Has abundant triacylglycerol lipase activity. Transfers fatty acid from triglyceride to retinol, hydrolyzes retinylesters, and generates 1,3-diacylglycerol from triglycerides. Additionally possesses acylglycerol transacylase and phospholipase A2 activities. In Homo sapiens (Human), this protein is Patatin-like phospholipase domain-containing protein 4.